Reading from the N-terminus, the 292-residue chain is tRNA-cytidine(32) 2-sulfurtransferase (292 aa).

Residues 53–58 carry the PP-loop motif motif; it reads SGGKDS. Residues Cys-128, Cys-131, and Cys-219 each contribute to the [4Fe-4S] cluster site.

Belongs to the TtcA family. As to quaternary structure, homodimer. Requires Mg(2+) as cofactor. It depends on [4Fe-4S] cluster as a cofactor.

It is found in the cytoplasm. It carries out the reaction cytidine(32) in tRNA + S-sulfanyl-L-cysteinyl-[cysteine desulfurase] + AH2 + ATP = 2-thiocytidine(32) in tRNA + L-cysteinyl-[cysteine desulfurase] + A + AMP + diphosphate + H(+). It participates in tRNA modification. Its function is as follows. Catalyzes the ATP-dependent 2-thiolation of cytidine in position 32 of tRNA, to form 2-thiocytidine (s(2)C32). The sulfur atoms are provided by the cysteine/cysteine desulfurase (IscS) system. The chain is tRNA-cytidine(32) 2-sulfurtransferase from Cereibacter sphaeroides (strain ATCC 17029 / ATH 2.4.9) (Rhodobacter sphaeroides).